Here is a 101-residue protein sequence, read N- to C-terminus: Small ribosomal subunit protein uS10 (101 aa).

This sequence belongs to the universal ribosomal protein uS10 family. Part of the 30S ribosomal subunit.

Its function is as follows. Involved in the binding of tRNA to the ribosomes. The protein is Small ribosomal subunit protein uS10 of Amoebophilus asiaticus (strain 5a2).